Here is a 252-residue protein sequence, read N- to C-terminus: Short chain dehydrogenase andC (252 aa).

Residues 1 to 25 (MGFLQDKVVIITGAAAGIGLATATA) form the signal peptide. I11, D57, and R119 together coordinate NADP(+). Residue S137 is the Proton donor of the active site. Residues Y151 and K155 each contribute to the NADP(+) site. Y151 (proton acceptor) is an active-site residue. K155 (lowers pKa of active site Tyr) is an active-site residue.

The protein belongs to the short-chain dehydrogenases/reductases (SDR) family.

It participates in secondary metabolite biosynthesis; terpenoid biosynthesis. Its function is as follows. Short chain dehydrogenase; part of the gene cluster that mediates the biosynthesis of anditomin, a fungal meroterpenoid. The first step of the pathway is the synthesis of 3,5-dimethylorsellinic acid (DMOA) by the polyketide synthase andM. DMOA is then converted to the phthalide compound 5,7-dihydroxy-4,6-dimethylphthalide (DHDMP) by the cytochrome P450 monooxygenase andK, which is further prenylated by the prenyltransferase andD to yield farnesyl-DHDMP. Further epoxidation by the FAD-dependent monooxygenase andE leads to epoxyfarnesyl-DHDMP. The next step involves the terpene cyclase andB that converts epoxyfarnesyl-DHDMP into preandiloid A through opening of the epoxide ring followed by the cyclization of the farnesyl moiety. Preandiloid A is in turn oxidized at the C-3 hydroxyl group to yield preandiloid B by the dehydrogenase andC. The dioxygenase andA is solely responsible for the dehydrogenation of preandiloid B leading to the enone preandiloid C, as well as for the intriguing structural rearrangement to generate the bicyclo[2.2.2]octane core, transforming preandiloid C into andiconin. FAD-binding monooxygenase andJ then produces andilesin D which is reduced by dehydrogenase andI to yield andilesin A. Action of acetyltransferase andG followed by a spontaneous acetate elimination leads then to andilesin B, which is in turn substrate of the short chain dehydrogenase andH to yield andilesin C. Finally, the dioxygenase andF catalyzes the transformation of andilesin C to anditomin. This chain is Short chain dehydrogenase andC, found in Emericella variicolor (Aspergillus stellatus).